Here is a 129-residue protein sequence, read N- to C-terminus: Transcriptional activator protein (129 aa).

Positions 13 to 28 (KAQHRAAKRRAIRRRR) match the Nuclear localization signal motif. Residues 33–50 (CGCSIYIHIDCRNNGFTH) fold into a zinc finger. Positions 73 to 118 (LFQDNQRRGSPLHQHQDIPLTNQVQPQPEESIGSPQGISQLPSMDD) are disordered. The span at 91-114 (PLTNQVQPQPEESIGSPQGISQLP) shows a compositional bias: polar residues. Positions 115–129 (SMDDIDDSFWENLFK) are transactivation.

Belongs to the geminiviridae transcriptional activator protein family. In terms of assembly, monomer. Homodimer. Homooligomer. Self-interaction correlates with nuclear localization and efficient activation of transcription. Monomers suppress local silencing by interacting with and inactivating host adenosine kinase (ADK) in the cytoplasm. Interacts with and inhibits host SNF1 kinase. Binds to ssDNA. In terms of processing, phosphorylated.

The protein localises to the host nucleus. It localises to the host cytoplasm. In terms of biological role, strong activator of the late viral genes promoters. Enhances the expression of the capsid protein and nuclear shuttle protein. Acts as a suppressor of RNA-mediated gene silencing, also known as post-transcriptional gene silencing (PTGS), a mechanism of plant viral defense that limits the accumulation of viral RNAs. Suppresses the host RNA silencing by inhibiting adenosine kinase (ADK), a kinase involved in a general methylation pathway. Also suppresses the host basal defense by interacting with and inhibiting SNF1 kinase, a key regulator of cell metabolism implicated in innate antiviral defense. Determines pathogenicity. The polypeptide is Transcriptional activator protein (Tomato golden mosaic virus (strain Yellow vein) (TGMV)).